A 567-amino-acid chain; its full sequence is SRSF protein kinase 3 (567 aa).

Residues 1 to 16 are compositionally biased toward gly residues; it reads MSASTGGGGDSGGSGG. The tract at residues 1–36 is disordered; sequence MSASTGGGGDSGGSGGSSSSSQASCGPESSGSELAL. The span at 17–32 shows a compositional bias: low complexity; the sequence is SSSSSQASCGPESSGS. At serine 50 the chain carries Phosphoserine. Residues 79-565 enclose the Protein kinase domain; sequence YHVVRKLGWG…AADCLQHPWL (487 aa). ATP is bound by residues 85–93 and lysine 108; that span reads LGWGHFSTV. Aspartate 212 (proton acceptor) is an active-site residue. 2 disordered regions span residues 238–283 and 298–351; these read QQAG…RLLE and ATQA…SQTS. The segment covering 248–258 has biased composition (polar residues); sequence SIVSTAPQEVL. Over residues 264-279 the composition is skewed to basic residues; it reads SKNKRKKMRRKRKQQK. The segment covering 327–348 has biased composition (low complexity); it reads AGPSPASSSPAPGGGRSLSAGS. Phosphoserine is present on serine 330.

It belongs to the protein kinase superfamily. CMGC Ser/Thr protein kinase family. Expressed in skeletal and heart muscle. Also expressed in the fetal brain.

It is found in the nucleus. Its subcellular location is the cytoplasm. It carries out the reaction L-seryl-[protein] + ATP = O-phospho-L-seryl-[protein] + ADP + H(+). It catalyses the reaction L-threonyl-[protein] + ATP = O-phospho-L-threonyl-[protein] + ADP + H(+). Functionally, serine/arginine-rich protein-specific kinase which specifically phosphorylates its substrates at serine residues located in regions rich in arginine/serine dipeptides, known as RS domains. Phosphorylates the SR splicing factor SRSF1 and the lamin-B receptor (LBR) in vitro. Required for normal muscle development. In Homo sapiens (Human), this protein is SRSF protein kinase 3 (SRPK3).